The primary structure comprises 130 residues: Small ribosomal subunit protein uS8 (130 aa).

The protein belongs to the universal ribosomal protein uS8 family. Part of the 30S ribosomal subunit.

One of the primary rRNA binding proteins, it binds directly to 16S rRNA central domain where it helps coordinate assembly of the platform of the 30S subunit. The sequence is that of Small ribosomal subunit protein uS8 from Pyrococcus horikoshii (strain ATCC 700860 / DSM 12428 / JCM 9974 / NBRC 100139 / OT-3).